We begin with the raw amino-acid sequence, 213 residues long: N-(5'-phosphoribosyl)anthranilate isomerase (213 aa).

Belongs to the TrpF family.

The enzyme catalyses N-(5-phospho-beta-D-ribosyl)anthranilate = 1-(2-carboxyphenylamino)-1-deoxy-D-ribulose 5-phosphate. It functions in the pathway amino-acid biosynthesis; L-tryptophan biosynthesis; L-tryptophan from chorismate: step 3/5. In Rhodopseudomonas palustris (strain TIE-1), this protein is N-(5'-phosphoribosyl)anthranilate isomerase.